A 349-amino-acid chain; its full sequence is Interferon-stimulated 20 kDa exonuclease-like 2 (349 aa).

Disordered stretches follow at residues 1–100 and 126–166; these read MSTL…AAVP and ALPK…KYSG. Residues 14–23 show a composition bias toward basic and acidic residues; sequence PPKKALEGNA. Basic residues predominate over residues 24-47; sequence KHRKFVKKRRLLERKGFLNKKKQP. Residues 54–66 are compositionally biased toward basic and acidic residues; sequence LHSEPSQKGETPR. A compositionally biased stretch (low complexity) spans 70 to 87; that stretch reads TWKATPLPKKKTTAASSS. A compositionally biased stretch (basic residues) spans 130–142; it reads IKSHPTRPQKKGS. One can recognise an Exonuclease domain in the interval 175-331; it reads MVAIDCEMVG…EDAQATMELY (157 aa).

Its subcellular location is the nucleus. The protein resides in the nucleolus. 3'-&gt; 5'-exoribonuclease involved in ribosome biogenesis in the processing of the 12S pre-rRNA. Displays a strong specificity for a 3'-end containing a free hydroxyl group. In Bos taurus (Bovine), this protein is Interferon-stimulated 20 kDa exonuclease-like 2 (ISG20L2).